Reading from the N-terminus, the 717-residue chain is Transport/processing ATP-binding protein ComA (717 aa).

A Peptidase C39 domain is found at 11–138; it reads QVDQMDCGVA…EEWTGVTLFM (128 aa). Residue Cys17 is part of the active site. 7 helical membrane passes run 18–38, 166–186, 205–225, 237–257, 281–301, 306–326, and 397–417; these read GVASLAMVFGYYGSYYFLAHL, GLIANIVLATLLVTVINIVGS, LGIISIGLVIVYILQQILSYA, LSIDVILSYIKHVFHLPMSFF, STILSIFLDVSTVVIISLVLF, NLFFMTLLALPIYTVIIFAFM, and VAHLLLNVGILWMGAVLVMDG. An ABC transmembrane type-1 domain is found at 168-450; sequence IANIVLATLL…IINLQTKLQT (283 aa). The ABC transporter domain occupies 484–717; sequence MTFKQVHYKY…GGFYAHLVNS (234 aa). Residue 517–524 participates in ATP binding; sequence GISGSGKT.

The protein belongs to the ABC transporter superfamily. HlyB family.

It localises to the cell membrane. Required for induction of competence. Seems to transport the competence-stimulating peptide (CSP). The polypeptide is Transport/processing ATP-binding protein ComA (comA) (Streptococcus pneumoniae (strain ATCC BAA-255 / R6)).